A 162-amino-acid chain; its full sequence is Endoribonuclease YbeY (162 aa).

3 residues coordinate Zn(2+): histidine 128, histidine 132, and histidine 138.

This sequence belongs to the endoribonuclease YbeY family. The cofactor is Zn(2+).

The protein resides in the cytoplasm. Functionally, single strand-specific metallo-endoribonuclease involved in late-stage 70S ribosome quality control and in maturation of the 3' terminus of the 16S rRNA. This is Endoribonuclease YbeY from Levilactobacillus brevis (strain ATCC 367 / BCRC 12310 / CIP 105137 / JCM 1170 / LMG 11437 / NCIMB 947 / NCTC 947) (Lactobacillus brevis).